Consider the following 261-residue polypeptide: Putative outer membrane protein TC_0650 (261 aa).

Positions 1-17 (MRFLFAFILLCSPWVSE) are cleaved as a signal peptide.

It is found in the cell outer membrane. This chain is Putative outer membrane protein TC_0650, found in Chlamydia muridarum (strain MoPn / Nigg).